Consider the following 278-residue polypeptide: MSVVQPAGRRLTVRDIASRKSPAAEPVVCLTAYTAPMARLLDPHVDLLLVGDSLGMVIYGLPTTHGVTVEMMIAHGQAVVRGSSHALVVVDMPFGSYQESPAQAFRNAARILSETGAAAVKLEGGREMAETVAFLVQRGVPVMGHVGLKPQMVHAMGGFRAQGRDEAEAEAVVAETRAIAEAGAFSIVVEGTFEQVAARATREVSVPTIGIGASADCDGQVLVIDDALGLFTDFTPKFVKRYADLASTVSAAAEAYAADVRARRFPAPEHCFGIRKVG.

Residues Asp52 and Asp91 each contribute to the Mg(2+) site. Residues 52–53, Asp91, and Lys121 each bind 3-methyl-2-oxobutanoate; that span reads DS. Glu123 provides a ligand contact to Mg(2+). The Proton acceptor role is filled by Glu190.

The protein belongs to the PanB family. In terms of assembly, homodecamer; pentamer of dimers. It depends on Mg(2+) as a cofactor.

The protein localises to the cytoplasm. The enzyme catalyses 3-methyl-2-oxobutanoate + (6R)-5,10-methylene-5,6,7,8-tetrahydrofolate + H2O = 2-dehydropantoate + (6S)-5,6,7,8-tetrahydrofolate. Its pathway is cofactor biosynthesis; (R)-pantothenate biosynthesis; (R)-pantoate from 3-methyl-2-oxobutanoate: step 1/2. Catalyzes the reversible reaction in which hydroxymethyl group from 5,10-methylenetetrahydrofolate is transferred onto alpha-ketoisovalerate to form ketopantoate. The sequence is that of 3-methyl-2-oxobutanoate hydroxymethyltransferase from Rhodospirillum rubrum (strain ATCC 11170 / ATH 1.1.1 / DSM 467 / LMG 4362 / NCIMB 8255 / S1).